The primary structure comprises 120 residues: Large ribosomal subunit protein bL20 (120 aa).

This sequence belongs to the bacterial ribosomal protein bL20 family.

Binds directly to 23S ribosomal RNA and is necessary for the in vitro assembly process of the 50S ribosomal subunit. It is not involved in the protein synthesizing functions of that subunit. This Ureaplasma parvum serovar 3 (strain ATCC 27815 / 27 / NCTC 11736) protein is Large ribosomal subunit protein bL20.